The chain runs to 469 residues: Transcription factor E2FB (469 aa).

Disordered stretches follow at residues 1–28 and 84–118; these read MSEE…PPLV and QTPV…AGSP. 2 stretches are compositionally biased toward polar residues: residues 8-22 and 100-118; these read QFPS…SLSS and SAKS…AGSP. A DNA-binding region spans residues 129–194; it reads RYDSSLGLLT…TLKNRIQWKG (66 aa). Positions 202-246 form a coiled coil; sequence ETIESIANLQDEVQNLAAEEARLDDQIRESQERLTSLSEDENNKR. Positions 210–238 are leucine-zipper; that stretch reads LQDEVQNLAAEEARLDDQIRESQERLTSL. The tract at residues 319–374 is disordered; it reads PQADEPSNVPDEPSNVPDVPSNLPSTSGLPENHDVSMPMKEESTERNMETQEVDDT. Positions 349–374 are enriched in basic and acidic residues; it reads ENHDVSMPMKEESTERNMETQEVDDT. The segment at 403-419 is retinoblastoma protein binding; the sequence is DYWFRSEVGEVSITDMW. The interval 426–469 is disordered; the sequence is DWNQMITFDQDHAGPSDNKILEQPQTPSSPTPEESTATRSPTGS. Residues 447–469 are compositionally biased toward low complexity; sequence EQPQTPSSPTPEESTATRSPTGS.

This sequence belongs to the E2F/DP family. In terms of assembly, heterodimer with DP proteins. Interacts (via dimerization domain) preferentially with DPA, but also with DPB. Interacts with PURA1 and retinoblastoma-related protein RBR1. Component of a DREAM-like complex which modulates a variety of developmentally regulated genes and of the mitotic genes in proliferating and differentiated cells. Interacts with MYB3R4 only at early stages of leaves development. Post-translationally, phosphorylated. In terms of tissue distribution, expressed in proliferating cells and several differentiated tissues. Detected in inflorescence and shoot apical meristems, cotyledonary vascular tissues, leaf primordia, young leaves, base of trichomes, central cylinder and elongation zone of roots, lateral root primordia, flowers, pistils of immature flowers and pollen grains.

Its subcellular location is the cytoplasm. It is found in the nucleus. Its function is as follows. Transcription activator that binds DNA cooperatively with DP proteins through the E2 recognition site, 5'-TTTC[CG]CGC-3' found in the promoter region of a number of genes whose products are involved in cell cycle regulation or in DNA replication. The binding of retinoblastoma-related proteins represses transactivation. Involved in the control of cell-cycle progression from G1 to S phase and from G2 to M phase. Stimulates cell proliferation and delays differentiation. Represses cell enlargement and endoreduplication in auxin-free conditions. The chain is Transcription factor E2FB (E2FB) from Arabidopsis thaliana (Mouse-ear cress).